Consider the following 130-residue polypeptide: ER membrane protein complex subunit 5 (130 aa).

Residues 1–3 (MAS) lie on the Cytoplasmic side of the membrane. A helical transmembrane segment spans residues 4-22 (SFWKGVVGIGLFALAHAAF). Residues 23 to 43 (SAAQHRSYMRLTEKENETLPI) lie on the Lumenal side of the membrane. A helical membrane pass occupies residues 44–63 (DIVLQTLLSFVITCYGIVHI). Residues 64-130 (SGEFKDMDAS…LRLRKLENFH (67 aa)) lie on the Cytoplasmic side of the membrane.

It belongs to the membrane magnesium transporter (TC 1.A.67) family. Component of the ER membrane protein complex (EMC).

The protein localises to the endoplasmic reticulum membrane. The protein resides in the golgi apparatus membrane. Its subcellular location is the early endosome membrane. Functionally, part of the endoplasmic reticulum membrane protein complex (EMC) that enables the energy-independent insertion into endoplasmic reticulum membranes of newly synthesized membrane proteins. Preferentially accommodates proteins with transmembrane domains that are weakly hydrophobic or contain destabilizing features such as charged and aromatic residues. Involved in the cotranslational insertion of multi-pass membrane proteins in which stop-transfer membrane-anchor sequences become ER membrane spanning helices. It is also required for the post-translational insertion of tail-anchored/TA proteins in endoplasmic reticulum membranes. By mediating the proper cotranslational insertion of N-terminal transmembrane domains in an N-exo topology, with translocated N-terminus in the lumen of the ER, controls the topology of multi-pass membrane proteins like the G protein-coupled receptors. By regulating the insertion of various proteins in membranes, it is indirectly involved in many cellular processes. May be involved in Mg(2+) transport. The protein is ER membrane protein complex subunit 5 of Danio rerio (Zebrafish).